A 1575-amino-acid polypeptide reads, in one-letter code: Mediator of RNA polymerase II transcription subunit 1 (1575 aa).

The tract at residues 1 to 670 is interaction with the Mediator complex and THRA; that stretch reads MKAQGETEDS…YGSSPLERQN (670 aa). The interval 16 to 590 is interaction with ESR1; it reads MSSLLERLHA…SIKDRHESVG (575 aa). 2 interaction with the Mediator complex regions span residues 108-212 and 215-390; these read FYVE…GYLT and SGGH…SLQG. Residues 405 to 644 are interaction with THRA; it reads PLILNMIRHQ…MAGNTKNHPM (240 aa). Residues 542–789 are interaction with VDR; it reads PASSPGYGMT…TDILSDIAEE (248 aa). Position 588 is a phosphoserine (Ser588). The LXXLL motif 1 motif lies at 604 to 608; the sequence is LTSLL. Disordered regions lie at residues 609 to 706, 737 to 760, 791 to 818, 874 to 895, and 951 to 1564; these read QITG…QTED, HITP…SHPQ, SKLP…HSQS, SQSG…NDDF, and SGSQ…GEED. A compositionally biased stretch (pro residues) spans 622–632; sequence PTPPHHTPPPV. Residues 622-701 are interaction with GATA1; sequence PTPPHHTPPP…SSRVPPDKPK (80 aa). The tract at residues 622–701 is interaction with PPARGC1A and THRA; that stretch reads PTPPHHTPPP…SSRVPPDKPK (80 aa). The LXXLL motif 2 motif lies at 645–649; that stretch reads LMNLL. The segment covering 655–675 has biased composition (polar residues); the sequence is QDFSTLYGSSPLERQNSSSGS. The interval 656–1066 is interaction with ESR1; sequence DFSTLYGSSP…TPPIPKITIQ (411 aa). Phosphoserine is present on Ser664. The segment covering 696 to 706 has biased composition (basic and acidic residues); it reads PPDKPKHQTED. Ser795 carries the phosphoserine modification. Phosphothreonine is present on Thr805. Polar residues predominate over residues 808-818; the sequence is RDSSSSGHSQS. Positions 875 to 902 match the Integrase domain-binding motif (IBM) motif; that stretch reads QSGFGEEYFDESSQSGDNDDFKGFASQA. Phosphoserine is present on residues Ser887, Ser953, and Ser955. The segment covering 963-974 has biased composition (basic and acidic residues); sequence LGKEKTQKRVKE. Positions 976-986 are enriched in gly residues; that stretch reads NGTGASSGSGP. Thr1032 bears the Phosphothreonine; by MAPK1 or MAPK3 mark. The span at 1034–1051 shows a compositional bias: low complexity; sequence PTSTGGSKSPGSSGRSQT. Residues Thr1051 and Thr1057 each carry the phosphothreonine modification. Low complexity-rich tracts occupy residues 1078 to 1094 and 1101 to 1152; these read SSHS…SSGS and SSSS…SQTG. Position 1158 is a phosphoserine (Ser1158). Over residues 1158-1184 the composition is skewed to polar residues; that stretch reads SPITKHGLSSGSSSTKMKPQGKPSSLM. N6-acetyllysine is present on Lys1179. Positions 1185 to 1197 are enriched in low complexity; sequence NPSISKPNISPSH. Ser1209 is subject to Phosphoserine. Thr1217 bears the Phosphothreonine mark. Composition is skewed to low complexity over residues 1220–1258 and 1265–1295; these read SSKA…GSVS and SNSC…SKGK. The residue at position 1225 (Ser1225) is a Phosphoserine. Residues 1251 to 1423 are interaction with TP53; that stretch reads SASSGSVSQK…KPGESGGDGL (173 aa). Residues Ser1304 and Ser1349 each carry the phosphoserine modification. Residues 1331-1352 show a composition bias toward polar residues; sequence MGASTNSSNHPMSSKHNTSGGE. The span at 1354–1366 shows a compositional bias: basic and acidic residues; it reads QSKREKSDKDKSK. 2 positions are modified to phosphoserine: Ser1405 and Ser1435. 2 stretches are compositionally biased toward polar residues: residues 1427–1442 and 1450–1484; these read IASS…SGST and PSHS…SPSS. Thr1442 carries the post-translational modification Phosphothreonine. Thr1459 carries the post-translational modification Phosphothreonine; by MAPK1 or MAPK3. 5 positions are modified to phosphoserine: Ser1465, Ser1467, Ser1481, Ser1483, and Ser1484. Residues 1498 to 1507 are compositionally biased toward basic residues; it reads KHKKHKKEKK. N6-acetyllysine is present on Lys1523. The span at 1527-1545 shows a compositional bias: polar residues; it reads WSKSPISSDPTASVTNNPI.

This sequence belongs to the Mediator complex subunit 1 family. Component of the Mediator complex, which is composed of MED1, MED4, MED6, MED7, MED8, MED9, MED10, MED11, MED12, MED13, MED13L, MED14, MED15, MED16, MED17, MED18, MED19, MED20, MED21, MED22, MED23, MED24, MED25, MED26, MED27, MED29, MED30, MED31, CCNC, CDK8 and CDC2L6/CDK11. The MED12, MED13, CCNC and CDK8 subunits form a distinct module termed the CDK8 module. Mediator containing the CDK8 module is less active than Mediator lacking this module in supporting transcriptional activation. Individual preparations of the Mediator complex lacking one or more distinct subunits have been variously termed ARC, CRSP, DRIP, PC2, SMCC and TRAP. This subunit specifically interacts with a number of nuclear receptors in a ligand-dependent fashion including AR, ESR1, ESR2, PPARA, PPARG, RORA, RXRA, RXRG, THRA, THRB and VDR. Interacts with CTNNB1, GABPA, GLI3, PPARGC1A and TP53. Interacts with GATA1 and YWHAH. Interacts with CLOCK; this interaction requires the presence of THRAP3. Interacts with CCAR1. Interacts with NR4A3. Interacts (via IBM motif) with PSIP1 (via IBD domain); phosphorylation increases its affinity for PSIP1. Interacts with USP22. In terms of processing, phosphorylated by MAPK1 or MAPK3 during G2/M phase which may enhance protein stability and promote entry into the nucleolus. Phosphorylation increases its interaction with PSIP1. Widely expressed in the adult, with high levels of expression in the liver, lung, intestinal mucosa, kidney cortex, thymic cortex, splenic follicle and seminiferous epithelium in testis. Also expressed in the adult heart, brain, spleen and skeletal muscle.

Its subcellular location is the nucleus. Functionally, component of the Mediator complex, a coactivator involved in the regulated transcription of nearly all RNA polymerase II-dependent genes. Mediator functions as a bridge to convey information from gene-specific regulatory proteins to the basal RNA polymerase II transcription machinery. Mediator is recruited to promoters by direct interactions with regulatory proteins and serves as a scaffold for the assembly of a functional preinitiation complex with RNA polymerase II and the general transcription factors. Essential for embryogenesis, including development of the central nervous system, heart, liver and placenta and for erythropoiesis. Also required for normal transcriptional control of thyroid-stimulating hormone beta (TSHB) in the pituitary. Acts as a coactivator for GATA1-mediated transcriptional activation during erythroid differentiation of K562 erythroleukemia cells. This Mus musculus (Mouse) protein is Mediator of RNA polymerase II transcription subunit 1 (Med1).